The sequence spans 543 residues: Cytochrome P450 2U1 (543 aa).

Transmembrane regions (helical) follow at residues 32–52 (PTGG…SWLW), 58–78 (GIPP…VLLP), 261–281 (VCLN…YLPF), and 342–362 (LFYI…NSLL). C490 is a binding site for heme. A helical membrane pass occupies residues 495–515 (LAKMELFLMFVSLMQSFTFVL).

This sequence belongs to the cytochrome P450 family. It depends on heme as a cofactor.

Its subcellular location is the endoplasmic reticulum membrane. It localises to the microsome membrane. It is found in the mitochondrion inner membrane. The catalysed reaction is an omega-methyl-long-chain fatty acid + reduced [NADPH--hemoprotein reductase] + O2 = an omega-hydroxy-long-chain fatty acid + oxidized [NADPH--hemoprotein reductase] + H2O + H(+). It carries out the reaction (5Z,8Z,11Z,14Z)-eicosatetraenoate + reduced [NADPH--hemoprotein reductase] + O2 = 19-hydroxy-(5Z,8Z,11Z,14Z)-eicosatetraenoate + oxidized [NADPH--hemoprotein reductase] + H2O + H(+). It catalyses the reaction (5Z,8Z,11Z,14Z)-eicosatetraenoate + reduced [NADPH--hemoprotein reductase] + O2 = 20-hydroxy-(5Z,8Z,11Z,14Z)-eicosatetraenoate + oxidized [NADPH--hemoprotein reductase] + H2O + H(+). The enzyme catalyses N-[(5Z,8Z,11Z,14Z)-eicosatetraenoyl]-serotonin + reduced [NADPH--hemoprotein reductase] + O2 = 2-oxo-N-[(5Z,8Z,11Z,14Z)-eicosatetraenoyl]-serotonin + oxidized [NADPH--hemoprotein reductase] + H2O + H(+). In terms of biological role, a cytochrome P450 monooxygenase involved in the metabolism of arachidonic acid and its conjugates. Mechanistically, uses molecular oxygen inserting one oxygen atom into a substrate, and reducing the second into a water molecule, with two electrons provided by NADPH via cytochrome P450 reductase (CPR; NADPH-ferrihemoprotein reductase). Acts as an omega and omega-1 hydroxylase for arachidonic acid and possibly for other long chain fatty acids. May modulate the arachidonic acid signaling pathway and play a role in other fatty acid signaling processes. May down-regulate the biological activities of N-arachidonoyl-serotonin, an endocannabinoid that has anti-nociceptive effects through inhibition of fatty acid amide hydrolase FAAH, TRPV1 receptor and T-type calcium channels. Catalyzes C-2 oxidation of the indole ring of N-arachidonoyl-serotonin forming a less active product 2-oxo-N-arachidonoyl-serotonin. The sequence is that of Cytochrome P450 2U1 (CYP2U1) from Bos taurus (Bovine).